The primary structure comprises 1485 residues: DNA topoisomerase 2 (1485 aa).

The segment covering 1–16 has biased composition (acidic residues); that stretch reads MSIDADFSDYEDEASG. The disordered stretch occupies residues 1 to 76; it reads MSIDADFSDY…NGNGNSNVST (76 aa). Positions 46-59 are enriched in polar residues; it reads DLRQTSLTSMTASE. Residues 64–76 show a composition bias toward low complexity; it reads VTNNGNGNSNVST. ATP is bound by residues Asn136, Asn165, 193 to 195, and 206 to 213; these read SSN and GRNGYGAK. The interval 388-392 is interaction with DNA; that stretch reads KKENK. 421–423 provides a ligand contact to ATP; that stretch reads QTK. In terms of domain architecture, Toprim spans 499 to 613; that stretch reads CVLILTEGDS…SLLQIPGFLI (115 aa). The Mg(2+) site is built by Glu505, Asp582, and Asp584. A Topo IIA-type catalytic domain is found at 745-1195; it reads IPSVVDGLKP…TPKELWLHDL (451 aa). Tyr835 serves as the catalytic O-(5'-phospho-DNA)-tyrosine intermediate. The tract at residues 1019–1028 is interaction with DNA; that stretch reads KLSRTQATSN. The span at 1216–1225 shows a compositional bias: basic and acidic residues; that stretch reads EEQSSRDFVN. The disordered stretch occupies residues 1216–1485; the sequence is EEQSSRDFVN…EDVDDYDESD (270 aa). The span at 1226-1242 shows a compositional bias: basic residues; the sequence is RTKKKPRGKSTGTRKPR. Polar residues predominate over residues 1260-1273; it reads ESKPSTTNRKQQTL. A compositionally biased stretch (basic and acidic residues) spans 1278 to 1307; that stretch reads ASKEPEKSSDINIVKTEDNSHGLSVEENRI. Residues Ser1310 and Ser1345 each carry the phosphoserine modification. Basic residues predominate over residues 1387 to 1396; it reads AKNKGKKASS. Residues 1413–1425 are compositionally biased toward polar residues; the sequence is GSSSTPKASSTNA. Ser1433 carries the post-translational modification Phosphoserine. Acidic residues predominate over residues 1473-1485; that stretch reads DNDEDVDDYDESD.

This sequence belongs to the type II topoisomerase family. As to quaternary structure, homodimer. Mg(2+) serves as cofactor. It depends on Mn(2+) as a cofactor. Ca(2+) is required as a cofactor. Phosphorylated at multiple sites at both extremities of the protein.

It localises to the nucleus. It catalyses the reaction ATP-dependent breakage, passage and rejoining of double-stranded DNA.. Functionally, control of topological states of DNA by transient breakage and subsequent rejoining of DNA strands. Topoisomerase II makes double-strand breaks. This is DNA topoisomerase 2 (top2) from Schizosaccharomyces pombe (strain 972 / ATCC 24843) (Fission yeast).